A 348-amino-acid polypeptide reads, in one-letter code: Uroporphyrinogen decarboxylase (348 aa).

Substrate-binding positions include 27–31, Phe46, Asp76, Tyr152, Ser207, and His320; that span reads RQAGR.

This sequence belongs to the uroporphyrinogen decarboxylase family. Homodimer.

The protein resides in the cytoplasm. It carries out the reaction uroporphyrinogen III + 4 H(+) = coproporphyrinogen III + 4 CO2. It participates in porphyrin-containing compound metabolism; protoporphyrin-IX biosynthesis; coproporphyrinogen-III from 5-aminolevulinate: step 4/4. Catalyzes the decarboxylation of four acetate groups of uroporphyrinogen-III to yield coproporphyrinogen-III. This chain is Uroporphyrinogen decarboxylase, found in Bacillus anthracis.